The following is a 239-amino-acid chain: Tetratricopeptide repeat protein 9B (239 aa).

Disordered stretches follow at residues 1–57 (MQRG…LGAA) and 99–126 (QGAR…SEEQ). 2 positions are modified to phosphoserine: Ser-7 and Ser-27. Pro residues predominate over residues 16–31 (PEPPPRPPPALSPPGS). A TPR 1 repeat occupies 65–99 (AVAFKAEGQRCYREKKFREAIGKYHRALLQLKAAQ). Pro residues predominate over residues 106 to 116 (LPAPAPGPTSS). Residues 171 to 204 (FKATYRAGIAFYHLGDYARALRYLQEARSREPTD) form a TPR 2 repeat.

This sequence belongs to the TTC9 family.

This chain is Tetratricopeptide repeat protein 9B (TTC9B), found in Homo sapiens (Human).